An 893-amino-acid chain; its full sequence is 104 kDa microneme/rhoptry antigen (893 aa).

Positions 1 to 19 (MKFLVLLFNILCLFPILGA) are cleaved as a signal peptide. 3 disordered regions span residues 492-666 (SKKK…FDPK), 681-799 (KTKE…PTGK), and 818-873 (KEHM…RKPD). Basic and acidic residues-rich tracts occupy residues 525-565 (SESK…EHKP) and 573-591 (KRPE…ESPK). The span at 595–606 (RPVSPQRPVSPK) shows a compositional bias: low complexity. Composition is skewed to basic and acidic residues over residues 731 to 755 (EEVK…DSPT), 788 to 797 (EAGRILRDPT), and 818 to 830 (KEHM…KIVV). Acidic residues predominate over residues 831 to 841 (DDDGTEADDED). The segment covering 851 to 869 (STVRRRRPRPKKSSKSSKP) has biased composition (basic residues). Asp873 carries the GPI-anchor amidated aspartate lipid modification. Positions 874-893 (SAFVPSIIFIFLVSLIVGIL) are cleaved as a propeptide — removed in mature form.

It localises to the cell membrane. This is 104 kDa microneme/rhoptry antigen from Theileria annulata.